The chain runs to 189 residues: dCTP deaminase (189 aa).

DCTP contacts are provided by residues 112–117 (KSTYAR), 136–138 (TLE), Gln157, Tyr171, and Gln181. The active-site Proton donor/acceptor is the Glu138.

The protein belongs to the dCTP deaminase family. Homotrimer.

The catalysed reaction is dCTP + H2O + H(+) = dUTP + NH4(+). Its pathway is pyrimidine metabolism; dUMP biosynthesis; dUMP from dCTP (dUTP route): step 1/2. Its function is as follows. Catalyzes the deamination of dCTP to dUTP. The sequence is that of dCTP deaminase from Xanthomonas campestris pv. campestris (strain 8004).